The chain runs to 358 residues: Starch-binding domain-containing protein 1 (358 aa).

At 1–6 (MGAVWS) the chain is on the extracellular side. Residues 7-23 (ALLVGGGLAGALFVWLL) form a helical membrane-spanning segment. The Cytoplasmic segment spans residues 24–358 (RGGPGDTGKD…KVVHAWWGIH (335 aa)). The segment covering 30 to 42 (TGKDGDAEQEKDA) has biased composition (basic and acidic residues). Disordered regions lie at residues 30 to 70 (TGKD…QELV) and 104 to 151 (SREV…SPMG). Low complexity predominate over residues 50 to 66 (PGGHQSGSSGLSPGPSG). S65 is subject to Phosphoserine. The span at 106-115 (EVCDNSREHV) shows a compositional bias: basic and acidic residues. A Phosphoserine modification is found at S117. Residues 126-140 (PATSETSNSRSYSEV) are compositionally biased toward polar residues. Phosphoserine occurs at positions 148, 175, 188, and 194. The LIR motif lies at 200-206 (HEEWEMV). 3 positions are modified to phosphoserine: S210, S211, and S220. The CBM20 domain maps to 258 to 357 (PAGSQQVSVR…DKVVHAWWGI (100 aa)).

In terms of assembly, interacts with the ATG8 family proteins GABARAP and GABARAPL1. Interacts with several glycogen-associated proteins, such as GYS2 (liver glycogen synthase), GDE (glycogen debranching enzyme), GBE1 (glycogen branching enzyme 1) and EPM2A (Laforin). Post-translationally, ubiquitinated, which leads to proteasomal degradation. In terms of tissue distribution, expressed at high level in skeletal and cardiac muscles. Moderately expressed in liver and placenta. No expression is found in pancreas, kidney or lung. Present in skeletal muscle, heart and placenta (at protein level).

The protein localises to the preautophagosomal structure membrane. It localises to the endoplasmic reticulum membrane. The protein resides in the cell membrane. Its subcellular location is the sarcolemma. It is found in the T-tubule. Acts as a cargo receptor for glycogen. Delivers its cargo to an autophagic pathway called glycophagy, resulting in the transport of glycogen to lysosomes. In Homo sapiens (Human), this protein is Starch-binding domain-containing protein 1.